The primary structure comprises 319 residues: Glutathione synthetase (319 aa).

One can recognise an ATP-grasp domain in the interval 127-311 (KIFVTEFADL…VASLLWDAIE (185 aa)). Residue 153-209 (RNEMGDIILKPLYGNGGAGVFHSARDDRNFSSLLEMFGQMFREPYIAQEYLPDVRKG) coordinates ATP. 2 residues coordinate Mg(2+): E282 and N284.

It belongs to the prokaryotic GSH synthase family. The cofactor is Mg(2+). Mn(2+) serves as cofactor.

It catalyses the reaction gamma-L-glutamyl-L-cysteine + glycine + ATP = glutathione + ADP + phosphate + H(+). It participates in sulfur metabolism; glutathione biosynthesis; glutathione from L-cysteine and L-glutamate: step 2/2. The chain is Glutathione synthetase from Agrobacterium fabrum (strain C58 / ATCC 33970) (Agrobacterium tumefaciens (strain C58)).